The chain runs to 213 residues: Ion-translocating oxidoreductase complex subunit E (213 aa).

The next 6 helical transmembrane spans lie at 25–45, 46–66, 77–97, 100–120, 135–155, and 181–201; these read TFGLVLGLCPTLAVTTSVENG, IGMAMGTLFVLVGSNMMVSAI, PVEIIVIATFVTIVDMVMEAF, DLYTSLGVFIPLIVVNCIVIG, IIDALGEGTGFLLVLILIGGI, and AMFMTMSPGAFLTIAVLMTIV.

It belongs to the NqrDE/RnfAE family. As to quaternary structure, the Rnf complex is probably composed of eight subunits, including RnfA, RnfB, RnfC, RnfD, RnfE and RnfG.

The protein localises to the cell membrane. Functionally, part of a membrane-bound complex that couples electron transfer with translocation of ions across the membrane. Catalyzes Na(+) transport, most probably coupled to electron transfer from reduced ferredoxin to methanophenazine and heterodisulfide reductase. Involved in heterodisulfide reduction during methanogenesis from acetate. This chain is Ion-translocating oxidoreductase complex subunit E, found in Methanosarcina acetivorans (strain ATCC 35395 / DSM 2834 / JCM 12185 / C2A).